Consider the following 402-residue polypeptide: Phosphoglycerate kinase (402 aa).

Substrate is bound by residues 21–23, R36, 59–62, R119, and R154; these read DFN and HLGR. ATP contacts are provided by residues K207, G298, E329, and 356–359; that span reads GGDA.

It belongs to the phosphoglycerate kinase family. In terms of assembly, monomer.

It is found in the cytoplasm. The enzyme catalyses (2R)-3-phosphoglycerate + ATP = (2R)-3-phospho-glyceroyl phosphate + ADP. It participates in carbohydrate degradation; glycolysis; pyruvate from D-glyceraldehyde 3-phosphate: step 2/5. This chain is Phosphoglycerate kinase (pgk), found in Chlamydia pneumoniae (Chlamydophila pneumoniae).